We begin with the raw amino-acid sequence, 59 residues long: MAEVRVGKNETLDSALRRFKRTCQRAGVFAEARKHEHYEKPSVKRKKKSEAARRRKRSF.

The tract at residues 34–59 (KHEHYEKPSVKRKKKSEAARRRKRSF) is disordered. Residues 43-59 (VKRKKKSEAARRRKRSF) are compositionally biased toward basic residues.

This sequence belongs to the bacterial ribosomal protein bS21 family.

The protein is Small ribosomal subunit protein bS21 of Desulforudis audaxviator (strain MP104C).